The sequence spans 430 residues: Mitochondrial distribution and morphology protein 10 (430 aa).

Over residues 215-234 (SSSAMNPPSGTSASETNGSG) the composition is skewed to polar residues. Disordered stretches follow at residues 215–237 (SSSA…GPSV) and 339–393 (LGAN…GPKE).

It belongs to the MDM10 family. As to quaternary structure, component of the ER-mitochondria encounter structure (ERMES) or MDM complex, composed of MMM1, MDM10, MDM12 and MDM34. Associates with the mitochondrial outer membrane sorting assembly machinery SAM(core) complex.

It localises to the mitochondrion outer membrane. In terms of biological role, component of the ERMES/MDM complex, which serves as a molecular tether to connect the endoplasmic reticulum and mitochondria. Components of this complex are involved in the control of mitochondrial shape and protein biogenesis and may function in phospholipid exchange. MDM10 is involved in the late assembly steps of the general translocase of the mitochondrial outer membrane (TOM complex). Functions in the TOM40-specific route of the assembly of outer membrane beta-barrel proteins, including the association of TOM40 with the receptor TOM22 and small TOM proteins. Can associate with the SAM(core) complex as well as the MDM12-MMM1 complex, both involved in late steps of the major beta-barrel assembly pathway, that is responsible for biogenesis of all outer membrane beta-barrel proteins. May act as a switch that shuttles between both complexes and channels precursor proteins into the TOM40-specific pathway. Plays a role in mitochondrial morphology and in the inheritance of mitochondria. This chain is Mitochondrial distribution and morphology protein 10, found in Chaetomium globosum (strain ATCC 6205 / CBS 148.51 / DSM 1962 / NBRC 6347 / NRRL 1970) (Soil fungus).